The following is a 116-amino-acid chain: T cell receptor alpha variable 14/delta variable 4 (116 aa).

The first 21 residues, 1 to 21 (MSLSSLLKVVTASLWLGPGIA), serve as a signal peptide directing secretion. An Ig-like domain is found at 22–116 (QKITQTQPGM…SAMYFCAMRE (95 aa)). A disulfide bridge connects residues Cys43 and Cys112. N-linked (GlcNAc...) asparagine glycosylation occurs at Asn78.

Alpha-beta TR is a heterodimer composed of an alpha and beta chain; disulfide-linked. The alpha-beta TR is associated with the transmembrane signaling CD3 coreceptor proteins to form the TR-CD3 (TcR or TCR). The assembly of alpha-beta TR heterodimers with CD3 occurs in the endoplasmic reticulum where a single alpha-beta TR heterodimer associates with one CD3D-CD3E heterodimer, one CD3G-CD3E heterodimer and one CD247 homodimer forming a stable octameric structure. CD3D-CD3E and CD3G-CD3E heterodimers preferentially associate with TR alpha and TR beta chains, respectively. The association of the CD247 homodimer is the last step of TcR assembly in the endoplasmic reticulum and is required for transport to the cell surface.

The protein localises to the cell membrane. Its function is as follows. V region of the variable domain of T cell receptor (TR) alpha chain that participates in the antigen recognition. Alpha-beta T cell receptors are antigen specific receptors which are essential to the immune response and are present on the cell surface of T lymphocytes. Recognize peptide-major histocompatibility (MH) (pMH) complexes that are displayed by antigen presenting cells (APC), a prerequisite for efficient T cell adaptive immunity against pathogens. Binding of alpha-beta TR to pMH complex initiates TR-CD3 clustering on the cell surface and intracellular activation of LCK that phosphorylates the ITAM motifs of CD3G, CD3D, CD3E and CD247 enabling the recruitment of ZAP70. In turn ZAP70 phosphorylates LAT, which recruits numerous signaling molecules to form the LAT signalosome. The LAT signalosome propagates signal branching to three major signaling pathways, the calcium, the mitogen-activated protein kinase (MAPK) kinase and the nuclear factor NF-kappa-B (NF-kB) pathways, leading to the mobilization of transcription factors that are critical for gene expression and essential for T cell growth and differentiation. The T cell repertoire is generated in the thymus, by V-(D)-J rearrangement. This repertoire is then shaped by intrathymic selection events to generate a peripheral T cell pool of self-MH restricted, non-autoaggressive T cells. Post-thymic interaction of alpha-beta TR with the pMH complexes shapes TR structural and functional avidity. This chain is T cell receptor alpha variable 14/delta variable 4, found in Homo sapiens (Human).